A 384-amino-acid polypeptide reads, in one-letter code: 1-deoxy-D-xylulose 5-phosphate reductoisomerase (384 aa).

NADPH is bound by residues Thr-10, Gly-11, Ser-12, Ile-13, Gly-36, Asn-38, and Asn-122. A 1-deoxy-D-xylulose 5-phosphate-binding site is contributed by Lys-123. NADPH is bound at residue Glu-124. Residue Asp-148 coordinates Mn(2+). The 1-deoxy-D-xylulose 5-phosphate site is built by Ser-149, Glu-150, Ser-174, and His-197. Residue Glu-150 participates in Mn(2+) binding. Gly-203 contributes to the NADPH binding site. 1-deoxy-D-xylulose 5-phosphate is bound by residues Ser-210, Asn-215, Lys-216, and Glu-219. Position 219 (Glu-219) interacts with Mn(2+).

The protein belongs to the DXR family. The cofactor is Mg(2+). Requires Mn(2+) as cofactor.

It catalyses the reaction 2-C-methyl-D-erythritol 4-phosphate + NADP(+) = 1-deoxy-D-xylulose 5-phosphate + NADPH + H(+). The protein operates within isoprenoid biosynthesis; isopentenyl diphosphate biosynthesis via DXP pathway; isopentenyl diphosphate from 1-deoxy-D-xylulose 5-phosphate: step 1/6. In terms of biological role, catalyzes the NADPH-dependent rearrangement and reduction of 1-deoxy-D-xylulose-5-phosphate (DXP) to 2-C-methyl-D-erythritol 4-phosphate (MEP). The sequence is that of 1-deoxy-D-xylulose 5-phosphate reductoisomerase from Geobacter metallireducens (strain ATCC 53774 / DSM 7210 / GS-15).